The primary structure comprises 282 residues: Bis(5'-nucleosyl)-tetraphosphatase, symmetrical (282 aa).

The protein belongs to the Ap4A hydrolase family.

The catalysed reaction is P(1),P(4)-bis(5'-adenosyl) tetraphosphate + H2O = 2 ADP + 2 H(+). In terms of biological role, hydrolyzes diadenosine 5',5'''-P1,P4-tetraphosphate to yield ADP. This Salmonella arizonae (strain ATCC BAA-731 / CDC346-86 / RSK2980) protein is Bis(5'-nucleosyl)-tetraphosphatase, symmetrical.